A 212-amino-acid chain; its full sequence is Pyridoxine/pyridoxamine 5'-phosphate oxidase (212 aa).

FMN-binding positions include 61–66 (RSVLLK), 76–77 (YT), lysine 83, and glutamine 105. Lysine 66 provides a ligand contact to substrate. Tyrosine 123, arginine 127, and serine 131 together coordinate substrate. FMN-binding positions include 140–141 (QS) and tryptophan 185. 191–193 (RLH) provides a ligand contact to substrate. Position 195 (arginine 195) interacts with FMN.

Belongs to the pyridoxamine 5'-phosphate oxidase family. Homodimer. Requires FMN as cofactor.

It carries out the reaction pyridoxamine 5'-phosphate + O2 + H2O = pyridoxal 5'-phosphate + H2O2 + NH4(+). The enzyme catalyses pyridoxine 5'-phosphate + O2 = pyridoxal 5'-phosphate + H2O2. It participates in cofactor metabolism; pyridoxal 5'-phosphate salvage; pyridoxal 5'-phosphate from pyridoxamine 5'-phosphate: step 1/1. It functions in the pathway cofactor metabolism; pyridoxal 5'-phosphate salvage; pyridoxal 5'-phosphate from pyridoxine 5'-phosphate: step 1/1. Catalyzes the oxidation of either pyridoxine 5'-phosphate (PNP) or pyridoxamine 5'-phosphate (PMP) into pyridoxal 5'-phosphate (PLP). The sequence is that of Pyridoxine/pyridoxamine 5'-phosphate oxidase from Dichelobacter nodosus (strain VCS1703A).